The following is a 207-amino-acid chain: Holliday junction resolvase RecU (207 aa).

A disordered region spans residues 1–21; that stretch reads MTIRYPNGQVYRQPGPTKSKS. Mg(2+) contacts are provided by Thr-87, Asp-89, Glu-102, and Gln-121.

The protein belongs to the RecU family. Requires Mg(2+) as cofactor.

Its subcellular location is the cytoplasm. It carries out the reaction Endonucleolytic cleavage at a junction such as a reciprocal single-stranded crossover between two homologous DNA duplexes (Holliday junction).. In terms of biological role, endonuclease that resolves Holliday junction intermediates in genetic recombination. Cleaves mobile four-strand junctions by introducing symmetrical nicks in paired strands. Promotes annealing of linear ssDNA with homologous dsDNA. Required for DNA repair, homologous recombination and chromosome segregation. This Lactiplantibacillus plantarum (strain ATCC BAA-793 / NCIMB 8826 / WCFS1) (Lactobacillus plantarum) protein is Holliday junction resolvase RecU.